The primary structure comprises 171 residues: Adenine phosphoribosyltransferase (171 aa).

This sequence belongs to the purine/pyrimidine phosphoribosyltransferase family. As to quaternary structure, homodimer.

The protein resides in the cytoplasm. It carries out the reaction AMP + diphosphate = 5-phospho-alpha-D-ribose 1-diphosphate + adenine. The protein operates within purine metabolism; AMP biosynthesis via salvage pathway; AMP from adenine: step 1/1. Catalyzes a salvage reaction resulting in the formation of AMP, that is energically less costly than de novo synthesis. The polypeptide is Adenine phosphoribosyltransferase (Mycoplasmopsis fermentans (strain ATCC 19989 / NBRC 14854 / NCTC 10117 / PG18) (Mycoplasma fermentans)).